The primary structure comprises 618 residues: Paraneoplastic antigen-like protein 5 (618 aa).

Residues 390-399 (AGEEGQRKES) are compositionally biased toward basic and acidic residues. 3 disordered regions span residues 390 to 409 (AGEEGQRKESGFWAESEPDE), 451 to 475 (RDTLTKSWGSPDKGTGDMSVAEGQQ), and 519 to 549 (SMITRPQGNPDRSWDTSGSQDGEDGCSELRM).

It belongs to the PNMA family. In terms of tissue distribution, restricted to testis, where expression is low. Not detected in the brain.

It is found in the nucleus. The protein is Paraneoplastic antigen-like protein 5 (Pnma5) of Mus musculus (Mouse).